Here is a 460-residue protein sequence, read N- to C-terminus: UDP-N-acetylmuramoylalanine--D-glutamate ligase (460 aa).

117 to 123 (GTNGKTT) lines the ATP pocket.

It belongs to the MurCDEF family.

It localises to the cytoplasm. The catalysed reaction is UDP-N-acetyl-alpha-D-muramoyl-L-alanine + D-glutamate + ATP = UDP-N-acetyl-alpha-D-muramoyl-L-alanyl-D-glutamate + ADP + phosphate + H(+). The protein operates within cell wall biogenesis; peptidoglycan biosynthesis. Functionally, cell wall formation. Catalyzes the addition of glutamate to the nucleotide precursor UDP-N-acetylmuramoyl-L-alanine (UMA). This chain is UDP-N-acetylmuramoylalanine--D-glutamate ligase, found in Prochlorococcus marinus (strain MIT 9313).